A 287-amino-acid polypeptide reads, in one-letter code: Small ribosomal subunit biogenesis GTPase RsgA (287 aa).

Residues 61–218 enclose the CP-type G domain; the sequence is SSELIRPTVA…LVDTPGFTTL (158 aa). GTP-binding positions include 110-113 and 161-169; these read NKED and GPSGAGKST. Zn(2+) is bound by residues cysteine 242, cysteine 247, histidine 249, and cysteine 255.

This sequence belongs to the TRAFAC class YlqF/YawG GTPase family. RsgA subfamily. Monomer. Associates with 30S ribosomal subunit, binds 16S rRNA. Zn(2+) is required as a cofactor.

The protein localises to the cytoplasm. Functionally, one of several proteins that assist in the late maturation steps of the functional core of the 30S ribosomal subunit. Helps release RbfA from mature subunits. May play a role in the assembly of ribosomal proteins into the subunit. Circularly permuted GTPase that catalyzes slow GTP hydrolysis, GTPase activity is stimulated by the 30S ribosomal subunit. This is Small ribosomal subunit biogenesis GTPase RsgA from Clostridium perfringens (strain SM101 / Type A).